The sequence spans 212 residues: MNQSLLAPYGNAIERVNAALTALREGKGVLVVDDEDRENEGDLIYSAETLTNEQMALLIRECSGIVCLCLTDERITQLELPPMVVDNNSQYGTAFTVSIEAKEGVTTGVSAADRVTTVKAAIADGAKPGDLARPGHVYPLRARPGGVLERRGHTEGTVDLMKLAGLKPFGVLCEVTLPDGTMARLPEIVEFGQQHNMPVLTIEDIVAYRNSQ.

Residues 37-38 (RE), Asp42, 150-154 (RRGHT), and Glu174 contribute to the D-ribulose 5-phosphate site. Glu38 provides a ligand contact to Mg(2+). His153 lines the Mg(2+) pocket.

The protein belongs to the DHBP synthase family. Homodimer. It depends on Mg(2+) as a cofactor. Mn(2+) serves as cofactor.

The catalysed reaction is D-ribulose 5-phosphate = (2S)-2-hydroxy-3-oxobutyl phosphate + formate + H(+). It participates in cofactor biosynthesis; riboflavin biosynthesis; 2-hydroxy-3-oxobutyl phosphate from D-ribulose 5-phosphate: step 1/1. Catalyzes the conversion of D-ribulose 5-phosphate to formate and 3,4-dihydroxy-2-butanone 4-phosphate. The protein is 3,4-dihydroxy-2-butanone 4-phosphate synthase of Shewanella piezotolerans (strain WP3 / JCM 13877).